We begin with the raw amino-acid sequence, 49 residues long: Large ribosomal subunit protein eL40 (49 aa).

It belongs to the eukaryotic ribosomal protein eL40 family.

In Natronomonas pharaonis (strain ATCC 35678 / DSM 2160 / CIP 103997 / JCM 8858 / NBRC 14720 / NCIMB 2260 / Gabara) (Halobacterium pharaonis), this protein is Large ribosomal subunit protein eL40.